We begin with the raw amino-acid sequence, 173 residues long: Catabolic 3-dehydroquinase (173 aa).

Residue Tyr-26 is the Proton acceptor of the active site. Residues Asn-102, His-108, and Asp-115 each coordinate substrate. The Proton donor role is filled by His-128. Substrate contacts are provided by residues 129–130 (VS) and Arg-139.

It belongs to the type-II 3-dehydroquinase family. In terms of assembly, homododecamer. Adopts a ring-like structure, composed of an arrangement of two hexameric rings stacked on top of one another.

The catalysed reaction is 3-dehydroquinate = 3-dehydroshikimate + H2O. It participates in aromatic compound metabolism; 3,4-dihydroxybenzoate biosynthesis; 3,4-dihydroxybenzoate from 3-dehydroquinate: step 1/2. Its function is as follows. 3-dehydroquinate dehydratase; part of the qa gene cluster that mediates the catabolism of quinic acid (QA) and as such, allows the use of QA as a sole carbon source. Catalyzes the second reaction in the inducible quinic acid catabolic pathway by converting 3-dehydroquinate into 3-dehydroshikimate. The qa cluster encodes 3 inducible enymes (qa-2, qa-3 and qa-4) catalyzing the first three reactions in the catabolism of quinic acid to protocatechuic acid (also known as 3,4-Dihydroxybenzoic acid). This is Catabolic 3-dehydroquinase from Neurospora crassa (strain ATCC 24698 / 74-OR23-1A / CBS 708.71 / DSM 1257 / FGSC 987).